The chain runs to 154 residues: Deoxyuridine 5'-triphosphate nucleotidohydrolase (154 aa).

Residues 64–66 (RSG), asparagine 77, 81–83 (TID), and lysine 91 each bind substrate.

It belongs to the dUTPase family. Homotrimer. Mg(2+) is required as a cofactor.

The enzyme catalyses dUTP + H2O = dUMP + diphosphate + H(+). It functions in the pathway pyrimidine metabolism; dUMP biosynthesis; dUMP from dCTP (dUTP route): step 2/2. Its function is as follows. This enzyme is involved in nucleotide metabolism: it produces dUMP, the immediate precursor of thymidine nucleotides and it decreases the intracellular concentration of dUTP so that uracil cannot be incorporated into DNA. The chain is Deoxyuridine 5'-triphosphate nucleotidohydrolase from Mycobacterium sp. (strain JLS).